A 286-amino-acid chain; its full sequence is Aminoglycoside N(3)-acetyltransferase III (286 aa).

This sequence belongs to the antibiotic N-acetyltransferase family.

The enzyme catalyses a 2-deoxystreptamine antibiotic + acetyl-CoA = an N(3)-acetyl-2-deoxystreptamine antibiotic + CoA + H(+). Its function is as follows. Resistance to antibiotics containing the 2-deoxy-streptamine ring including gentamicin, kanamycin, tobramycin, neomycin and apramycin. In Salmonella sp, this protein is Aminoglycoside N(3)-acetyltransferase III (aacC3).